A 214-amino-acid chain; its full sequence is Pyridoxine/pyridoxamine 5'-phosphate oxidase (214 aa).

Substrate contacts are provided by residues 8 to 11 (RINY) and Lys66. FMN contacts are provided by residues 61-66 (RIVLIK), 76-77 (FT), Arg82, Lys83, and Gln105. The substrate site is built by Tyr123, Arg127, and Ser131. Residues 140–141 (QS) and Trp184 contribute to the FMN site. A substrate-binding site is contributed by 190-192 (RLH). Arg194 contributes to the FMN binding site.

It belongs to the pyridoxamine 5'-phosphate oxidase family. Homodimer. The cofactor is FMN.

The enzyme catalyses pyridoxamine 5'-phosphate + O2 + H2O = pyridoxal 5'-phosphate + H2O2 + NH4(+). The catalysed reaction is pyridoxine 5'-phosphate + O2 = pyridoxal 5'-phosphate + H2O2. Its pathway is cofactor metabolism; pyridoxal 5'-phosphate salvage; pyridoxal 5'-phosphate from pyridoxamine 5'-phosphate: step 1/1. The protein operates within cofactor metabolism; pyridoxal 5'-phosphate salvage; pyridoxal 5'-phosphate from pyridoxine 5'-phosphate: step 1/1. In terms of biological role, catalyzes the oxidation of either pyridoxine 5'-phosphate (PNP) or pyridoxamine 5'-phosphate (PMP) into pyridoxal 5'-phosphate (PLP). This chain is Pyridoxine/pyridoxamine 5'-phosphate oxidase, found in Burkholderia lata (strain ATCC 17760 / DSM 23089 / LMG 22485 / NCIMB 9086 / R18194 / 383).